A 335-amino-acid chain; its full sequence is DNA-directed RNA polymerase subunit alpha (335 aa).

Residues 1 to 233 (MTAVNDFLTP…QQIAVFVDLE (233 aa)) are alpha N-terminal domain (alpha-NTD). Positions 247 to 335 (IDPILLRPVD…DDDRLNAKLR (89 aa)) are alpha C-terminal domain (alpha-CTD).

Belongs to the RNA polymerase alpha chain family. In terms of assembly, homodimer. The RNAP catalytic core consists of 2 alpha, 1 beta, 1 beta' and 1 omega subunit. When a sigma factor is associated with the core the holoenzyme is formed, which can initiate transcription.

It catalyses the reaction RNA(n) + a ribonucleoside 5'-triphosphate = RNA(n+1) + diphosphate. Functionally, DNA-dependent RNA polymerase catalyzes the transcription of DNA into RNA using the four ribonucleoside triphosphates as substrates. This Alcanivorax borkumensis (strain ATCC 700651 / DSM 11573 / NCIMB 13689 / SK2) protein is DNA-directed RNA polymerase subunit alpha.